The following is a 225-amino-acid chain: MGIRAIVVDTAGTTTDLNFIEEILFPYSAKALPAFLEENQHNVLVENCICDVQDIALEPDASLARVTEILLQWIKEDRKATPLKTIQGLIWKQGYANGEFKGHIFPDFIEALDGYKQQGLRVYSFSSGSVEAQKLLFSHSDAGDLNDKFNGHFDTRTGNKRFKQAYCNIVNTISLSPKQILFVSDVLEELKAASEAGLNVVQMVRDDSQRTGDFKTISSFAELSI.

This sequence belongs to the HAD-like hydrolase superfamily. MasA/MtnC family. As to quaternary structure, monomer. It depends on Mg(2+) as a cofactor.

It catalyses the reaction 5-methylsulfanyl-2,3-dioxopentyl phosphate + H2O = 1,2-dihydroxy-5-(methylsulfanyl)pent-1-en-3-one + phosphate. Its pathway is amino-acid biosynthesis; L-methionine biosynthesis via salvage pathway; L-methionine from S-methyl-5-thio-alpha-D-ribose 1-phosphate: step 3/6. The protein operates within amino-acid biosynthesis; L-methionine biosynthesis via salvage pathway; L-methionine from S-methyl-5-thio-alpha-D-ribose 1-phosphate: step 4/6. Bifunctional enzyme that catalyzes the enolization of 2,3-diketo-5-methylthiopentyl-1-phosphate (DK-MTP-1-P) into the intermediate 2-hydroxy-3-keto-5-methylthiopentenyl-1-phosphate (HK-MTPenyl-1-P), which is then dephosphorylated to form the acireductone 1,2-dihydroxy-3-keto-5-methylthiopentene (DHK-MTPene). The chain is Enolase-phosphatase E1 from Shewanella halifaxensis (strain HAW-EB4).